An 849-amino-acid chain; its full sequence is MSAQSLPAATPPTLKPPRIIRPRPPSRHRAPHSPGPLHNGSSPKALPQISNDASASVCTSIFWEPPTASLKPPALLPPSVSRTSLDSQTSPDSPSSTPSPSPVSRRSISPEPAPCSPVPPPKPSGSSRTPLPSGPTPLQDGSASAPGTVRRLAGKFEWGAEGKAQSSDSLERCSQGSTEVNGEKETPEAALSGNGSQENGTPDAALACPPCCPCVCHVAKPGLELRWVPVGSSEDILRIPCRASPLRASRSRINPPVISHPPVVLTSYRSTAERKLLPPLKPPKPTKVRQDISTSEELPQPDLKLPSEDGIQTATKAWEGDRPEGAPLNAPPVALEGREEEGLDGLKGLQWELPLQDEPLYQTYRAAVLSEELWGVGEDGGPSPANPGEAPTFSRLPGPRNTLWQELPAVRGSGLLESLSPQERRMQESLFEVVTSEASYLRSLRLLTDTFVLSQALRDTLTPRDHHTLFSNVQRVQSVSERFLGTLLSRVRSSPHITDLCDVVHAHAVGPFFVYVDYVRNQQYQEETYSRLMDTNVRFSAELRRLQSLPKCERLPLPSFLLLPFQRITRLRMLLQNILSQTEEGSSRQENAQKALGAVSKIIERCSAEVGRMKQTEELIRLTQRLRFHKVKALPLVSWSRRLELQGELTELGCRRGGVLFTSRPRFTPLCLLLFSDLLLITQPKSGQRLQVLDYAHRSLVQAQQVPDPSGPPTFRLSLLSNHQGRPTHRLLQAASLSDMQRWLGAFPTPGPLPCSPDTIYEDCECSQELCSEPSTPSKTEGQSLESKAPRKHLHKNPEGWLKGLPGAFPAQLVCEVTGEHERRKHLRQHQKLLEAVGPSSGTPDTPQP.

Disordered stretches follow at residues 1–146 (MSAQ…ASAP), 159–202 (GAEG…NGTP), and 277–308 (LPPLKPPKPTKVRQDISTSEELPQPDLKLPSE). Over residues 18 to 31 (RIIRPRPPSRHRAP) the composition is skewed to basic residues. Positions 48–59 (QISNDASASVCT) are enriched in polar residues. Residues 65 to 110 (PPTASLKPPALLPPSVSRTSLDSQTSPDSPSSTPSPSPVSRRSISP) are compositionally biased toward low complexity. Ser-107 and Ser-109 each carry phosphoserine. A compositionally biased stretch (pro residues) spans 111–123 (EPAPCSPVPPPKP). Residues 164 to 180 (AQSSDSLERCSQGSTEV) are compositionally biased toward polar residues. Tyr-361 is subject to Phosphotyrosine; by EPHB2. The region spanning 425 to 609 (RMQESLFEVV…SKIIERCSAE (185 aa)) is the DH domain. Polar residues-rich tracts occupy residues 771 to 786 (CSEPSTPSKTEGQSLE) and 840 to 849 (SSGTPDTPQP). 2 disordered regions span residues 771–803 (CSEPSTPSKTEGQSLESKAPRKHLHKNPEGWLK) and 819–849 (GEHERRKHLRQHQKLLEAVGPSSGTPDTPQP).

Interacts with EPHA4. Interacts with EPHB2. Phosphorylated on tyrosine residues upon EFNA1 stimulation. EPHB2-dependent phosphorylation at Tyr-361 triggers UBE3A-mediated ubiquitination. In terms of processing, ubiquitinated; UBE3A-mediated ubiquitination and degradation by the proteasome promotes EFNB1-dependent synapse formation. In terms of tissue distribution, at P12, expressed is detected in the CA1 region and the dentate gyrus of the hippocampus.

It localises to the cell projection. The protein localises to the dendrite. Specific GEF for RhoA activation. Does not activate RAC1 or CDC42. Regulates vascular smooth muscle contractility. Negatively regulates excitatory synapse development by suppressing the synapse-promoting activity of EPHB2. The polypeptide is Rho guanine nucleotide exchange factor 15 (Arhgef15) (Mus musculus (Mouse)).